The sequence spans 277 residues: Energy-coupling factor transporter ATP-binding protein EcfA1 (277 aa).

The ABC transporter domain maps to 5-242 (VKVNNISFEY…IKMLKEIGLD (238 aa)). 41-48 (GHNGSGKS) provides a ligand contact to ATP.

The protein belongs to the ABC transporter superfamily. Energy-coupling factor EcfA family. In terms of assembly, forms a stable energy-coupling factor (ECF) transporter complex composed of 2 membrane-embedded substrate-binding proteins (S component), 2 ATP-binding proteins (A component) and 2 transmembrane proteins (T component).

It localises to the cell membrane. Its function is as follows. ATP-binding (A) component of a common energy-coupling factor (ECF) ABC-transporter complex. Unlike classic ABC transporters this ECF transporter provides the energy necessary to transport a number of different substrates. The sequence is that of Energy-coupling factor transporter ATP-binding protein EcfA1 from Clostridioides difficile (strain 630) (Peptoclostridium difficile).